Here is a 3132-residue protein sequence, read N- to C-terminus: Enniatin synthetase (3132 aa).

Residues 53–466 (ADDKQRAVGH…VEKVDMMTQE (414 aa)) form a condensation 1 region. Positions 186 to 212 (NDEHPRQFETPDSSQATPEEDLQPNPS) are disordered. The interval 495–887 (SQSPNKAAVA…GRMDSQVKIR (393 aa)) is adenylation 1. Residues 994-1013 (SQKTHSTPSQQSQAAISSGT) form a disordered region. The Carrier 1 domain occupies 1010-1086 (SSGTDTETKL…GLKAIVIGTS (77 aa)). Ser-1047 carries the post-translational modification O-(pantetheine 4'-phosphoryl)serine. Residues 1105-1534 (SYAQNRMWFL…ETCISVLPLT (430 aa)) form a condensation 2 region. Residues 1563-1960 (FREQAAANPE…GRMDNQFKIR (398 aa)) are adenylation 2. The segment at 2021-2177 (EGWQDHFESG…YLAEVIDGLI (157 aa)) is S-adenosyl-L-methionine-dependent N-methyltransferase. 2 Carrier domains span residues 2504 to 2578 (FPIS…RQGL) and 2598 to 2672 (APRT…ESSH). O-(pantetheine 4'-phosphoryl)serine occurs at positions 2538 and 2632. Positions 2719–3124 (QDVYPSTQMQ…RHVLEEVCKT (406 aa)) are condensation 3.

This sequence belongs to the NRP synthetase family. Pantetheine 4'-phosphate is required as a cofactor.

It functions in the pathway antibiotic biosynthesis; enniatin biosynthesis. In terms of biological role, nonribosomal peptide synthetase that synthesizes enniatin by coupling three D-hydroxycarboxylic acids and three L-amino acids via amide and ester bonds in an alternating fashion. Whereas ESYN1 can accept different amino acids as precursors (L-valine, L-isoleucine or L-leucine), only one species of D-hydroxycarboxylic acid can be found in natural enniatin isolates (D-hydroxyisovaleric acid, D-Hiv). D-Hiv stems from L-valine deanimation by a valine aminotransferase to 2-keto-isovaleric acid (2-Kiv), which becomes subsequently reduced by a keto-isovaleric acid reductase (KivR) to D-Hiv. This chain is Enniatin synthetase, found in Fusarium oxysporum (Fusarium vascular wilt).